The following is a 299-amino-acid chain: Ribosomal RNA small subunit methyltransferase H (299 aa).

S-adenosyl-L-methionine is bound by residues 35 to 37 (GGH), Asp-54, Tyr-80, Asp-101, and Gln-108.

The protein belongs to the methyltransferase superfamily. RsmH family.

It localises to the cytoplasm. The catalysed reaction is cytidine(1402) in 16S rRNA + S-adenosyl-L-methionine = N(4)-methylcytidine(1402) in 16S rRNA + S-adenosyl-L-homocysteine + H(+). Its function is as follows. Specifically methylates the N4 position of cytidine in position 1402 (C1402) of 16S rRNA. This Coprothermobacter proteolyticus (strain ATCC 35245 / DSM 5265 / OCM 4 / BT) protein is Ribosomal RNA small subunit methyltransferase H.